The primary structure comprises 484 residues: Poly(A) RNA polymerase GLD2 (484 aa).

2 positions are modified to phosphoserine: serine 62 and serine 69. A disordered region spans residues 72–97 (FRGRKRLSDEKNLPLDGKRQRFHSPH). The Nuclear localization signal signature appears at 76-92 (KRLSDEKNLPLDGKRQR). The span at 77-90 (RLSDEKNLPLDGKR) shows a compositional bias: basic and acidic residues. Serine 95 is subject to Phosphoserine. Mg(2+)-binding residues include aspartate 213 and aspartate 215. One can recognise a PAP-associated domain in the interval 386–440 (NLGDLLLGFLKYYATEFDWNSQMISVREAKAIPRPDGIEWRNKYICVEEPFDGTN).

Belongs to the DNA polymerase type-B-like family. GLD2 subfamily. Interacts with CPEB1, CPEB2, CPSF1 and PABPC1. Interacts with QKI isoform QKI7; promoting recruitment to miRNA miR-122 and miR-122 stabilization. Requires Mg(2+) as cofactor. Mn(2+) is required as a cofactor. Expressed in brain. Within brain, it is expressed in cerebellum, hippocampus and medulla.

The protein localises to the cytoplasm. It is found in the nucleus. It catalyses the reaction RNA(n) + ATP = RNA(n)-3'-adenine ribonucleotide + diphosphate. Functionally, cytoplasmic poly(A) RNA polymerase that adds successive AMP monomers to the 3'-end of specific RNAs, forming a poly(A) tail. In contrast to the canonical nuclear poly(A) RNA polymerase, it only adds poly(A) to selected cytoplasmic mRNAs. Does not play a role in replication-dependent histone mRNA degradation. Adds a single nucleotide to the 3' end of specific miRNAs, monoadenylation stabilizes and prolongs the activity of some but not all miRNAs. The chain is Poly(A) RNA polymerase GLD2 from Homo sapiens (Human).